A 442-amino-acid polypeptide reads, in one-letter code: MKEDEPAGPKVEDLIAQAKMVLDFNWTGEYTRPGPRLYPHQWSWDSALIALGYARYAPDRAMRELSHLFDAQWKNGLLPQIVFNPDFAAYFPDASFWHADESPDAPTHLRTSGIVQPPVHATAVLALLRNAAEAPGVRSFCEKAFSRLVSWHDYLYRERDPGGENLVYIRHPWESGMDNSPMWDAILESMFLYPSDIPSYKRADTHFVSSEDRPESAAYDRFAYLVKLFAERNYDEARIREDCPFLVQDVLFNSLLCRAERDLAELARTLGEEPSAFEARARKTAEAINDKLWDGERGTYLGFDLVSGAHIKVLAAPNFVALYGEVPDRKRARAMLARLSSPSFSLTEGTGVPVTSYDRLGFGFSSVRYWRGPVWVNIDWFLMHGLRRYGYEDEADRLREAIVRLCREEGFYEYFDPTTGMGHGSDLFSWTAALLLDVVLEG.

Substrate-binding positions include tyrosine 38, 42-45 (WSWD), tyrosine 90, glutamine 116, and glycine 176. Aspartate 178 acts as the Proton donor in catalysis. Substrate contacts are provided by residues arginine 213 and 369-370 (YW). The Proton acceptor role is filled by glutamate 413.

It belongs to the glycosyl hydrolase 63 family. As to quaternary structure, homodimer in solution.

It catalyses the reaction (2R)-2-O-(alpha-D-mannosyl)-glycerate + H2O = D-mannose + (R)-glycerate. The enzyme catalyses (2R)-2-O-(alpha-D-glucopyranosyl)-glycerate + H2O = (R)-glycerate + D-glucose. Its activity is regulated as follows. Activity is not stimulated by divalent cations and not affected in the presence of EDTA. Its function is as follows. Hydrolase that catalyzes the hydrolysis of mannosylglycerate (MG), a solute produced in response to osmotic stress in thermophiles, into mannose and glycerate. Can also hydrolyze glucosylglycerate (GG) to glucose and glycerate, with similar catalytic efficiency. Is highly specific for MG and GG, and cannot use mannosylglyceramide (MGA), glucosylglycerol, mannosylglucosylglycerate (MGG), glucosylglucosylglycerate (GGG) or trehalose as substrates. The protein is Mannosylglycerate hydrolase of Rubrobacter radiotolerans (Arthrobacter radiotolerans).